Here is a 327-residue protein sequence, read N- to C-terminus: Phosphate acyltransferase (327 aa).

It belongs to the PlsX family. As to quaternary structure, homodimer. Probably interacts with PlsY.

It is found in the cytoplasm. It carries out the reaction a fatty acyl-[ACP] + phosphate = an acyl phosphate + holo-[ACP]. It participates in lipid metabolism; phospholipid metabolism. Functionally, catalyzes the reversible formation of acyl-phosphate (acyl-PO(4)) from acyl-[acyl-carrier-protein] (acyl-ACP). This enzyme utilizes acyl-ACP as fatty acyl donor, but not acyl-CoA. The sequence is that of Phosphate acyltransferase from Thermotoga maritima (strain ATCC 43589 / DSM 3109 / JCM 10099 / NBRC 100826 / MSB8).